Here is a 66-residue protein sequence, read N- to C-terminus: Large ribosomal subunit protein bL33c (66 aa).

This sequence belongs to the bacterial ribosomal protein bL33 family.

The protein resides in the plastid. It is found in the chloroplast. The protein is Large ribosomal subunit protein bL33c of Oryza nivara (Indian wild rice).